Here is a 302-residue protein sequence, read N- to C-terminus: uncharacterized protein (302 aa).

Transmembrane regions (helical) follow at residues 10-30, 65-85, 102-122, 130-150, 162-182, 190-210, 224-244, 251-271, and 282-302; these read VLSVLVLVLLGYILKVLGVLG, LVLIPVICMITGTLSGTIAYL, VAAAMMNSGFLGYPVTAGIFG, IFYDTGTTLMFTSLGLLLSHI, AVFFPPLWAFLLGVIFNLWGL, ILGYLSGAAVPLIMISLGLTL, LVSGLRLLISPLMAAGISYVL, FSVTVLEASMPSAMLAAVLAI, and SCIFMSTILSLVSLPLWSVVL.

It belongs to the auxin efflux carrier (TC 2.A.69) family.

The protein resides in the cell membrane. This is an uncharacterized protein from Methanothermobacter thermautotrophicus (strain ATCC 29096 / DSM 1053 / JCM 10044 / NBRC 100330 / Delta H) (Methanobacterium thermoautotrophicum).